Reading from the N-terminus, the 567-residue chain is NADH-ubiquinone oxidoreductase chain 2 (567 aa).

The next 14 membrane-spanning stretches (helical) occupy residues 2–22 (LILS…IDTI), 43–63 (IGII…LSYI), 85–105 (NIFN…LLSI), 133–153 (LNIY…LLLT), 158–178 (ISIF…TGII), 189–209 (LFYY…ISLL), 236–256 (ILIG…AAPM), 274–294 (YISL…ILNL), 312–332 (LIYI…IGGL), 340–360 (ILAY…LSLI), 372–392 (IIYI…LIIA), 423–443 (LIFC…LFGF), 459–479 (LFLS…YLYF), and 530–550 (VGNY…FNFI).

It belongs to the complex I subunit 2 family.

The protein resides in the mitochondrion inner membrane. It carries out the reaction a ubiquinone + NADH + 5 H(+)(in) = a ubiquinol + NAD(+) + 4 H(+)(out). In terms of biological role, core subunit of the mitochondrial membrane respiratory chain NADH dehydrogenase (Complex I) that is believed to belong to the minimal assembly required for catalysis. Complex I functions in the transfer of electrons from NADH to the respiratory chain. The immediate electron acceptor for the enzyme is believed to be ubiquinone. The polypeptide is NADH-ubiquinone oxidoreductase chain 2 (ND2) (Wickerhamomyces canadensis (Yeast)).